The chain runs to 37 residues: Large ribosomal subunit protein bL36 (37 aa).

Belongs to the bacterial ribosomal protein bL36 family.

The polypeptide is Large ribosomal subunit protein bL36 (Sulfurovum sp. (strain NBC37-1)).